The following is a 129-amino-acid chain: Glutaredoxin-like protein ECU08_1380 (129 aa).

A Glutaredoxin domain is found at 26 to 126 (EADYGEMVRR…PLLTQNREPV (101 aa)).

It belongs to the glutaredoxin family.

The protein resides in the cytoplasm. Functionally, has a glutathione-disulfide oxidoreductase activity in the presence of NADPH and glutathione reductase. Reduces low molecular weight disulfides and proteins. This chain is Glutaredoxin-like protein ECU08_1380, found in Encephalitozoon cuniculi (strain GB-M1) (Microsporidian parasite).